The chain runs to 99 residues: Co-chaperonin GroES (99 aa).

The protein belongs to the GroES chaperonin family. As to quaternary structure, heptamer of 7 subunits arranged in a ring. Interacts with the chaperonin GroEL.

It is found in the cytoplasm. In terms of biological role, together with the chaperonin GroEL, plays an essential role in assisting protein folding. The GroEL-GroES system forms a nano-cage that allows encapsulation of the non-native substrate proteins and provides a physical environment optimized to promote and accelerate protein folding. GroES binds to the apical surface of the GroEL ring, thereby capping the opening of the GroEL channel. The chain is Co-chaperonin GroES from Methylacidiphilum infernorum (isolate V4) (Methylokorus infernorum (strain V4)).